The following is a 542-amino-acid chain: MTQILLPIALLCLFAASTLSNPLLVELPNGELRGRDNGFYYSYESIPYAEPPIDDLCLEEPRPYTERWENTFDATRPPVDCLQWSQLISQPNKLTGSEDCLTVSIYKPKNLTRISFPVVAHIFGGGWSFGAAIDDGVRPFSSSGNVIVVKTTTEWERLGFMSTGDSVIPGNFGLKDQRLAIKWIRNNIARFGGDPHNIILLGFSTGGSSVHLQLMHKEYGQLVKGAISISGTATVPWAVQANARDLAFRYGKLLGCNNPKNSRELKDCLKKTDAEEFVSTLRHLQVFDYVPFGPFGPVVESPEVESPFLTELPLDTIRSGNFAQVPWLASYTPENGIYNAALLLAKDANGKERIEELNTRWNELAPYFLAYPYTLKRSEMNAHSQKLKYQYLGYKNFSVVNYFDVQRLFTNELYKKGIELSLDSHRKHGASPVYAYVYDNPADKSLAQFLAKRSDISLGTGMGDDYYLLMNNPLREPLRADEKIVSWKLVKMVEDFAAHETLVYDDCVFPNNLGKKKFQLVVIGRNYCKQLEVESFARHGVQ.

The signal sequence occupies residues 1–22 (MTQILLPIALLCLFAASTLSNP). Cysteine 81 and cysteine 100 are oxidised to a cystine. Residue asparagine 110 is glycosylated (N-linked (GlcNAc...) asparagine). Serine 204 serves as the catalytic Acyl-ester intermediate. Cysteine 256 and cysteine 268 are joined by a disulfide. An N-linked (GlcNAc...) asparagine glycan is attached at asparagine 396. A disulfide bridge connects residues cysteine 507 and cysteine 528.

This sequence belongs to the type-B carboxylesterase/lipase family. In terms of assembly, monomer. In terms of tissue distribution, specifically expressed in the ejaculatory bulbs of male.

The protein resides in the secreted. The enzyme catalyses a carboxylic ester + H2O = an alcohol + a carboxylate + H(+). In terms of biological role, transferred from the ejaculatory bulbs of males to the female genitals upon copulation, plays an important role in the reproductive biology. The polypeptide is Esterase S (EstS) (Drosophila virilis (Fruit fly)).